A 279-amino-acid chain; its full sequence is Cyanocobalamin reductase / alkylcobalamin dealkylase (279 aa).

Residues Asp104, 115 to 118 (ILAQ), 129 to 131 (YYQ), Cys149, and Ile160 contribute to the substrate site. The interval 239 to 279 (PSEHPSTTSELPLSLLTKPQNSRRARSWLSPSVSPPVSPGP) is disordered. Over residues 243-257 (PSTTSELPLSLLTKP) the composition is skewed to low complexity. Phosphoserine is present on residues Ser247, Ser272, and Ser276.

It belongs to the MMACHC family. Monomer in the absence of bound substrate. Homodimer; dimerization is triggered by binding to FMN or adenosylcobalamin. Interacts with LMBRD1 and ABCD4; the interaction ensures the transport of cobalamin from the lysosome to the cytoplasm. Forms a multiprotein complex with MMADHC, MTR and MTRR; the interaction with MTR could modulate MMACHC-dependent processing of cobalamin. Heterodimer with MMADHC; the interaction might play a role in the regulation of the balance between AdoCbl and MeCbl synthesis. It depends on FAD as a cofactor. FMN serves as cofactor. In terms of tissue distribution, detected in liver and kidney (at protein level). Detected in embryos.

The protein resides in the cytoplasm. The protein localises to the cytosol. The enzyme catalyses 2 cob(II)alamin-[cyanocobalamin reductase] + 2 hydrogen cyanide + NADP(+) = 2 cyanocob(III)alamin + 2 apo-[cyanocobalamin reductase] + NADPH + H(+). The catalysed reaction is apo-[alkylcobalamin reductase] + an R-cob(III)alamin + glutathione = cob(I)alamin-[alkylcobalamin reductase] + an S-substituted glutathione + H(+). It carries out the reaction apo-[alkylcobalamin reductase] + methylcob(III)alamin + glutathione = S-methyl glutathione + cob(I)alamin-[alkylcobalamin reductase] + H(+). It catalyses the reaction apo-[alkylcobalamin reductase] + adenosylcob(III)alamin + glutathione = S-adenosylglutathione + cob(I)alamin-[alkylcobalamin reductase] + H(+). Its function is as follows. Cobalamin (vitamin B12) cytosolic chaperone that catalyzes the reductive decyanation of cyanocob(III)alamin (cyanocobalamin, CNCbl) to yield cob(II)alamin and cyanide, using FAD or FMN as cofactors and NADPH as cosubstrate. Cyanocobalamin constitutes the inactive form of vitamin B12 introduced from the diet, and is converted into the active cofactors methylcobalamin (MeCbl) involved in methionine biosynthesis, and 5'-deoxyadenosylcobalamin (AdoCbl) involved in the TCA cycle. Forms a complex with the lysosomal transporter ABCD4 and its chaperone LMBRD1, to transport cobalamin across the lysosomal membrane into the cytosol. The processing of cobalamin in the cytosol occurs in a multiprotein complex composed of at least MMACHC, MMADHC, MTRR (methionine synthase reductase) and MTR (methionine synthase) which may contribute to shuttle safely and efficiently cobalamin towards MTR in order to produce methionine. Also acts as a glutathione transferase by catalyzing the dealkylation of the alkylcob(III)alamins MeCbl and AdoCbl, using the thiolate of glutathione for nucleophilic displacement to generate cob(I)alamin and the corresponding glutathione thioether. The conversion of incoming MeCbl or AdoCbl into a common intermediate cob(I)alamin is necessary to meet the cellular needs for both cofactors. Cysteine and homocysteine cannot substitute for glutathione in this reaction. This is Cyanocobalamin reductase / alkylcobalamin dealkylase from Mus musculus (Mouse).